The following is a 582-amino-acid chain: Probable DNA ligase (582 aa).

Glu243 is a binding site for ATP. The active-site N6-AMP-lysine intermediate is Lys245. Residues Arg250, Arg265, Glu295, Phe335, Arg410, and Lys416 each coordinate ATP.

Belongs to the ATP-dependent DNA ligase family. Requires Mg(2+) as cofactor.

The enzyme catalyses ATP + (deoxyribonucleotide)n-3'-hydroxyl + 5'-phospho-(deoxyribonucleotide)m = (deoxyribonucleotide)n+m + AMP + diphosphate.. Its function is as follows. DNA ligase that seals nicks in double-stranded DNA during DNA replication, DNA recombination and DNA repair. The chain is Probable DNA ligase from Dictyoglomus turgidum (strain DSM 6724 / Z-1310).